The primary structure comprises 120 residues: Chaperonin GroEL (120 aa).

23–27 serves as a coordination point for ATP; it reads DGTTT.

The protein belongs to the chaperonin (HSP60) family. Forms a cylinder of 14 subunits composed of two heptameric rings stacked back-to-back. Interacts with the co-chaperonin GroES.

The protein localises to the cytoplasm. It catalyses the reaction ATP + H2O + a folded polypeptide = ADP + phosphate + an unfolded polypeptide.. In terms of biological role, together with its co-chaperonin GroES, plays an essential role in assisting protein folding. The GroEL-GroES system forms a nano-cage that allows encapsulation of the non-native substrate proteins and provides a physical environment optimized to promote and accelerate protein folding. This chain is Chaperonin GroEL, found in Mycobacterium malmoense.